The primary structure comprises 236 residues: Peptidase E (236 aa).

Residues Ser-122, Asp-137, and His-159 each act as charge relay system in the active site.

It belongs to the peptidase S51 family.

It localises to the cytoplasm. It carries out the reaction Dipeptidase E catalyzes the hydrolysis of dipeptides Asp-|-Xaa. It does not act on peptides with N-terminal Glu, Asn or Gln, nor does it cleave isoaspartyl peptides.. Its function is as follows. Hydrolyzes dipeptides containing N-terminal aspartate residues. May play a role in allowing the cell to use peptide aspartate to spare carbon otherwise required for the synthesis of the aspartate family of amino acids. The sequence is that of Peptidase E from Shewanella sp. (strain W3-18-1).